Here is a 439-residue protein sequence, read N- to C-terminus: tRNA-2-methylthio-N(6)-dimethylallyladenosine synthase (439 aa).

The MTTase N-terminal domain maps to 2–119 (KKLYLKTHGC…LPDLLDSVIQ (118 aa)). [4Fe-4S] cluster-binding residues include cysteine 11, cysteine 48, cysteine 82, cysteine 156, cysteine 160, and cysteine 163. A Radical SAM core domain is found at 142–374 (RAEGPSAFVS…QNRINVKAAE (233 aa)). In terms of domain architecture, TRAM spans 377 to 439 (QSMVGTQQRI…RPYSLWGEIC (63 aa)).

The protein belongs to the methylthiotransferase family. MiaB subfamily. Monomer. The cofactor is [4Fe-4S] cluster.

It localises to the cytoplasm. The catalysed reaction is N(6)-dimethylallyladenosine(37) in tRNA + (sulfur carrier)-SH + AH2 + 2 S-adenosyl-L-methionine = 2-methylsulfanyl-N(6)-dimethylallyladenosine(37) in tRNA + (sulfur carrier)-H + 5'-deoxyadenosine + L-methionine + A + S-adenosyl-L-homocysteine + 2 H(+). Catalyzes the methylthiolation of N6-(dimethylallyl)adenosine (i(6)A), leading to the formation of 2-methylthio-N6-(dimethylallyl)adenosine (ms(2)i(6)A) at position 37 in tRNAs that read codons beginning with uridine. The polypeptide is tRNA-2-methylthio-N(6)-dimethylallyladenosine synthase (Coxiella burnetii (strain Dugway 5J108-111)).